Reading from the N-terminus, the 347-residue chain is Mediator of RNA polymerase II transcription subunit 7 (347 aa).

2 disordered regions span residues 97 to 172 (GIER…TQTH) and 302 to 326 (VPVG…GAEE). Low complexity-rich tracts occupy residues 108–171 (STTT…STQT) and 302–312 (VPVGARTGTTV).

This sequence belongs to the Mediator complex subunit 7 family. Component of the Mediator complex.

Its subcellular location is the nucleus. In terms of biological role, component of the Mediator complex, a coactivator involved in the regulated transcription of nearly all RNA polymerase II-dependent genes. Mediator functions as a bridge to convey information from gene-specific regulatory proteins to the basal RNA polymerase II transcription machinery. Mediator is recruited to promoters by direct interactions with regulatory proteins and serves as a scaffold for the assembly of a functional preinitiation complex with RNA polymerase II and the general transcription factors. In Neurospora crassa (strain ATCC 24698 / 74-OR23-1A / CBS 708.71 / DSM 1257 / FGSC 987), this protein is Mediator of RNA polymerase II transcription subunit 7 (med-7).